The chain runs to 367 residues: tRNA (cytosine(34)-C(5))-methyltransferase, mitochondrial (367 aa).

S-adenosyl-L-methionine contacts are provided by residues 170 to 176 (CAAPGGK), E193, D224, and D242. Catalysis depends on C296, which acts as the Nucleophile.

The protein belongs to the class I-like SAM-binding methyltransferase superfamily. RsmB/NOP family.

It is found in the mitochondrion matrix. The enzyme catalyses cytidine(34) in mitochondrial tRNA + S-adenosyl-L-methionine = 5-methylcytidine(34) in mitochondrial tRNA + S-adenosyl-L-homocysteine + H(+). Its function is as follows. Mitochondrial tRNA methyltransferase that mediates methylation of cytosine to 5-methylcytosine (m5C) at position 34 of mt-tRNA(Met). mt-tRNA(Met) methylation at cytosine(34) takes place at the wobble position of the anticodon and initiates the formation of 5-formylcytosine (f(5)c) at this position. mt-tRNA(Met) containing the f(5)c modification at the wobble position enables recognition of the AUA codon in addition to the AUG codon, expanding codon recognition in mitochondrial translation. The protein is tRNA (cytosine(34)-C(5))-methyltransferase, mitochondrial of Danio rerio (Zebrafish).